A 633-amino-acid polypeptide reads, in one-letter code: MGKVIGIDLGTTNSCVAVMDGKNSKVIENAEGMRTTPSIVAFSDDGERLVGQPAKRQAVTNPERTFFAVKRLVGRRYDDPMVEKDKKLVPYKIVKASNGDAWVEADGQTYSPSQVSAFILQKMKETAEAHLGQKVDQAVITVPAYFNDAQRQATKDAGKIAGLEVLRIINEPTAAALAYGLDKTKAGTIAVYDLGGGTFDVSILEIGDGVFEVKSTNGDTFLGGEDFDMRLVSYLADEFQKEQGINLRNDKLALQRLKEAAEKAKIELSSTTQTEINLPFITADQSGPKHLTMKLTRAKFEALVDDLVQKTIEPCRKALKDAGLTAGEIGEVVLVGGMTRMPKVQEVVKQLFGKEPHKGVNPDEVVAIGAAIQAGVLQGDVKDVLLLDVTPLSLGIETLGGVFTRIIERNTTIPTKKSQVFSTAEDNQNAVTIRVFQGEREMAADNKILGQFDLMGIPPAPRGMPQIEVTFDIDANGIVNVSAKDKATGKEQQIRIQASGGLSDSDIDKMVKDAEANAAEDKKRREAVDAKNHADALVHSTEKALAEHGSKVAEPERRAIEDALSDLRESLKSDDAEVIKAKTNTLAQASMKLGEAMYTQQAESDAAKHAAKDDIVDADFTEVDDDKNNKKSA.

Phosphothreonine; by autocatalysis is present on T198.

The protein belongs to the heat shock protein 70 family.

Acts as a chaperone. The sequence is that of Chaperone protein DnaK from Rhodopseudomonas palustris (strain HaA2).